The following is a 1405-amino-acid chain: DNA-directed RNA polymerase III subunit rpc1 (1405 aa).

Zn(2+) contacts are provided by Cys66, Cys69, Cys76, His79, Cys106, Cys109, and Cys153. Mg(2+) contacts are provided by Asp493, Asp495, and Asp497. The interval 838–850 (PTEFLFHAISGRE) is bridging helix.

This sequence belongs to the RNA polymerase beta' chain family. As to quaternary structure, component of the RNA polymerase III (Pol III) complex consisting of 17 subunits.

It localises to the nucleus. It carries out the reaction RNA(n) + a ribonucleoside 5'-triphosphate = RNA(n+1) + diphosphate. Functionally, DNA-dependent RNA polymerase catalyzes the transcription of DNA into RNA using the four ribonucleoside triphosphates as substrates. Largest and catalytic core component of RNA polymerase III which synthesizes small RNAs, such as 5S rRNA and tRNAs. Forms the polymerase active center together with the second largest subunit. A single-stranded DNA template strand of the promoter is positioned within the central active site cleft of Pol III. A bridging helix emanates from RPC1 and crosses the cleft near the catalytic site and is thought to promote translocation of Pol III by acting as a ratchet that moves the RNA-DNA hybrid through the active site by switching from straight to bent conformations at each step of nucleotide addition. The sequence is that of DNA-directed RNA polymerase III subunit rpc1 (rpc1) from Schizosaccharomyces pombe (strain 972 / ATCC 24843) (Fission yeast).